A 144-amino-acid polypeptide reads, in one-letter code: Granulocyte-macrophage colony-stimulating factor (144 aa).

The signal sequence occupies residues 1-17; it reads MWLQGLLLLGTVACSIS. An O-linked (GalNAc...) serine glycan is attached at S24. A glycan (O-linked (GalNAc...) threonine) is linked at T27. Residues N44 and N54 are each glycosylated (N-linked (GlcNAc...) asparagine). 2 disulfides stabilise this stretch: C71–C113 and C105–C138.

It belongs to the GM-CSF family. Monomer. The signaling GM-CSF receptor complex is a dodecamer of two head-to-head hexamers of two alpha, two beta, and two ligand subunits.

It localises to the secreted. Cytokine that stimulates the growth and differentiation of hematopoietic precursor cells from various lineages, including granulocytes, macrophages, eosinophils and erythrocytes. The chain is Granulocyte-macrophage colony-stimulating factor (CSF2) from Chlorocebus aethiops (Green monkey).